The chain runs to 275 residues: Peflin (275 aa).

A run of 8 repeats spans residues 21–29, 31–39, 41–49, 50–59, 60–68, 76–84, 85–91, and 92–100. Disordered stretches follow at residues 21-45 and 59-103; these read PPGG…PGGG and SAGG…GGVP. The interval 21 to 100 is 8 X 9 AA approximate tandem repeat of [AP]-P-G-G-P-Y-G-G-P-P; the sequence is PPGGYYPGPP…GTQPGHYGQG (80 aa). Over residues 31-45 the composition is skewed to gly residues; it reads HGGGQYGSGLPPGGG. The span at 59–70 shows a compositional bias: low complexity; that stretch reads SAGGVPSGTPSG. 5 consecutive EF-hand domains span residues 105 to 140, 146 to 174, 172 to 207, 208 to 244, and 245 to 274; these read NVDP…SNWS, TCLM…WKFL, KFLQ…MGYN, LSPQ…LQVL, and TEAF…ASRM. 5 residues coordinate Ca(2+): Asp-118, Asp-120, Ser-122, Tyr-124, and Glu-129. Residues Asp-185, Asp-187, Ser-189, Ser-191, and Glu-196 each contribute to the Ca(2+) site. Positions 195–275 are required for interaction with PDCD6; that stretch reads TELQQALSQM…FVTMTASRML (81 aa).

Heterodimer; heterodimerizes (via the EF-hand 5) with PDCD6. Dissociates from PDCD6 in presence of calcium. Post-translationally, ubiquitinated by the BCR(KLHL12) E3 ubiquitin ligase complex.

Its subcellular location is the cytoplasm. It localises to the endoplasmic reticulum. The protein localises to the membrane. It is found in the cytoplasmic vesicle. The protein resides in the COPII-coated vesicle membrane. In terms of biological role, calcium-binding protein that acts as an adapter that bridges unrelated proteins or stabilizes weak protein-protein complexes in response to calcium. Together with PDCD6, acts as a calcium-dependent adapter for the BCR(KLHL12) complex, a complex involved in endoplasmic reticulum (ER)-Golgi transport by regulating the size of COPII coats. In response to cytosolic calcium increase, the heterodimer formed with PDCD6 interacts with, and bridges together the BCR(KLHL12) complex and SEC31 (SEC31A or SEC31B), promoting monoubiquitination of SEC31 and subsequent collagen export, which is required for neural crest specification. Its role in the heterodimer formed with PDCD6 is however unclear: some evidence shows that PEF1 and PDCD6 work together and promote association between PDCD6 and SEC31 in presence of calcium. Other reports show that PEF1 dissociates from PDCD6 in presence of calcium, and may act as a negative regulator of PDCD6. Also acts as a negative regulator of ER-Golgi transport; possibly by inhibiting interaction between PDCD6 and SEC31. This is Peflin from Mus musculus (Mouse).